Consider the following 117-residue polypeptide: Putative small ubiquitin-related modifier 6 (117 aa).

A disordered region spans residues 1 to 30 (MSTKSSSIHGRNEVKMEGEKRKDVESESTH). A compositionally biased stretch (basic and acidic residues) spans 10 to 28 (GRNEVKMEGEKRKDVESES). Positions 31–108 (VTLNVKGQDE…IDALLPQESG (78 aa)) constitute a Ubiquitin-like domain. Glycine 108 is covalently cross-linked (Glycyl lysine isopeptide (Gly-Lys) (interchain with K-? in acceptor proteins)).

Belongs to the ubiquitin family. SUMO subfamily. Interacts with SAE2, SCE1, SIZ1 and MMS21 Covalently attached to a number of proteins.

The protein resides in the nucleus. The protein localises to the cytoplasm. Ubiquitin-like protein which can be covalently attached to target lysines as a monomer. Does not seem to be involved in protein degradation and may function as an antagonist of ubiquitin in the degradation process. This Arabidopsis thaliana (Mouse-ear cress) protein is Putative small ubiquitin-related modifier 6 (SUMO6).